The sequence spans 99 residues: Aspartyl/glutamyl-tRNA(Asn/Gln) amidotransferase subunit C (99 aa).

The protein belongs to the GatC family. In terms of assembly, heterotrimer of A, B and C subunits.

The enzyme catalyses L-glutamyl-tRNA(Gln) + L-glutamine + ATP + H2O = L-glutaminyl-tRNA(Gln) + L-glutamate + ADP + phosphate + H(+). It catalyses the reaction L-aspartyl-tRNA(Asn) + L-glutamine + ATP + H2O = L-asparaginyl-tRNA(Asn) + L-glutamate + ADP + phosphate + 2 H(+). In terms of biological role, allows the formation of correctly charged Asn-tRNA(Asn) or Gln-tRNA(Gln) through the transamidation of misacylated Asp-tRNA(Asn) or Glu-tRNA(Gln) in organisms which lack either or both of asparaginyl-tRNA or glutaminyl-tRNA synthetases. The reaction takes place in the presence of glutamine and ATP through an activated phospho-Asp-tRNA(Asn) or phospho-Glu-tRNA(Gln). This Burkholderia lata (strain ATCC 17760 / DSM 23089 / LMG 22485 / NCIMB 9086 / R18194 / 383) protein is Aspartyl/glutamyl-tRNA(Asn/Gln) amidotransferase subunit C.